A 143-amino-acid chain; its full sequence is Transcriptional regulator MraZ (143 aa).

2 SpoVT-AbrB domains span residues 5–47 (THTP…PMQE) and 76–119 (ASSE…DLRT).

The protein belongs to the MraZ family. As to quaternary structure, forms oligomers.

It is found in the cytoplasm. The protein localises to the nucleoid. This Kineococcus radiotolerans (strain ATCC BAA-149 / DSM 14245 / SRS30216) protein is Transcriptional regulator MraZ.